A 484-amino-acid polypeptide reads, in one-letter code: Perphorin-2 (484 aa).

Residues Asn-16, Asn-240, Asn-256, Asn-265, Asn-326, Asn-330, Asn-356, and Asn-411 are each glycosylated (N-linked (GlcNAc...) asparagine).

The protein resides in the secreted. The protein localises to the extracellular space. It localises to the extracellular matrix. Its function is as follows. May be involved in conversion of asexual males and females to the sexual pathway. The protein is Perphorin-2 of Volvox carteri (Green alga).